The chain runs to 230 residues: Ion-translocating oxidoreductase complex subunit E (230 aa).

The next 6 membrane-spanning stretches (helical) occupy residues 18–38, 39–59, 63–83, 86–106, 125–145, and 182–202; these read ALVQ…ATNA, LGLG…VSAL, TPAE…VSAV, LINA…PLIV, WLSA…MFVL, and PFLL…MLAV.

This sequence belongs to the NqrDE/RnfAE family. In terms of assembly, the complex is composed of six subunits: RsxA, RsxB, RsxC, RsxD, RsxE and RsxG.

The protein resides in the cell inner membrane. Functionally, part of a membrane-bound complex that couples electron transfer with translocation of ions across the membrane. Required to maintain the reduced state of SoxR. The polypeptide is Ion-translocating oxidoreductase complex subunit E (Salmonella dublin (strain CT_02021853)).